A 244-amino-acid chain; its full sequence is tRNA pseudouridine synthase A (244 aa).

Asp-52 functions as the Nucleophile in the catalytic mechanism. Tyr-110 serves as a coordination point for substrate.

Belongs to the tRNA pseudouridine synthase TruA family. Homodimer.

The enzyme catalyses uridine(38/39/40) in tRNA = pseudouridine(38/39/40) in tRNA. Functionally, formation of pseudouridine at positions 38, 39 and 40 in the anticodon stem and loop of transfer RNAs. This Pelobacter propionicus (strain DSM 2379 / NBRC 103807 / OttBd1) protein is tRNA pseudouridine synthase A.